The following is a 798-amino-acid chain: Exo-1,4-beta-xylosidase xlnD (798 aa).

Residues 1-20 form the signal peptide; sequence MPGAASIVAVLAALLPTALG. Residues N23, N87, N142, and N237 are each glycosylated (N-linked (GlcNAc...) asparagine). Residue D310 is part of the active site. N-linked (GlcNAc...) asparagine glycosylation is found at N326, N391, N404, N443, N480, N522, N618, N645, N658, N685, and N707.

The protein belongs to the glycosyl hydrolase 3 family.

It localises to the secreted. The catalysed reaction is Hydrolysis of (1-&gt;4)-beta-D-xylans, to remove successive D-xylose residues from the non-reducing termini.. It participates in glycan degradation; xylan degradation. In terms of biological role, xylan 1,4-beta-xylosidase involved in the hydrolysis of xylan, a major structural heterogeneous polysaccharide found in plant biomass representing the second most abundant polysaccharide in the biosphere, after cellulose. The chain is Exo-1,4-beta-xylosidase xlnD (xlnD) from Aspergillus oryzae (strain ATCC 42149 / RIB 40) (Yellow koji mold).